The primary structure comprises 183 residues: MSPERRPVEIRPATAADMAAVCDIVNHYIETSTVNFRTEPQTPQEWIDDLERLQDRYPWLVAEVEGVVAGIAYAGPWKARNAYDWTVESTVYVSHRHQRLGLGSTLYTHLLKSMEAQGFKSVVAVIGLPNDPSVRLHEALGYTARGTLRAAGYKHGGWHDVGFWQRDFELPAPPRPVRPVTQI.

The N-acetyltransferase domain occupies 8–169; that stretch reads VEIRPATAAD…DVGFWQRDFE (162 aa). Acetyl-CoA-binding positions include 91 to 93, 99 to 104, and asparagine 130; these read VYV and RLGLGS.

Belongs to the acetyltransferase family. PAT/BAR subfamily.

The enzyme catalyses phosphinothricin + acetyl-CoA = N-acetylphosphinothricin + CoA + H(+). Its function is as follows. Inactivates phosphinothricin (PPT) by transfer of an acetyl group from acetyl CoA. This enzyme is an effector of phosphinothricin tripeptide (PTT or bialaphos) resistance. The polypeptide is Phosphinothricin N-acetyltransferase (Streptomyces viridochromogenes (strain DSM 40736 / JCM 4977 / BCRC 1201 / Tue 494)).